The following is a 298-amino-acid chain: tRNA dimethylallyltransferase (298 aa).

10–17 (GPTASGKT) is a binding site for ATP. 12-17 (TASGKT) contacts substrate. An interaction with substrate tRNA region spans residues 35–38 (DSMC).

This sequence belongs to the IPP transferase family. As to quaternary structure, monomer. Mg(2+) is required as a cofactor.

It catalyses the reaction adenosine(37) in tRNA + dimethylallyl diphosphate = N(6)-dimethylallyladenosine(37) in tRNA + diphosphate. Its function is as follows. Catalyzes the transfer of a dimethylallyl group onto the adenine at position 37 in tRNAs that read codons beginning with uridine, leading to the formation of N6-(dimethylallyl)adenosine (i(6)A). The sequence is that of tRNA dimethylallyltransferase from Hydrogenobaculum sp. (strain Y04AAS1).